The following is a 595-amino-acid chain: Cyclin-dependent kinase-like 3 (595 aa).

The Protein kinase domain occupies 4–286 (YETLGKVGEG…STDLLRHDYF (283 aa)). Residues 10 to 18 (VGEGSYGTV) and Lys-33 contribute to the ATP site. Positions 45-51 (KIATREI) match the [NKR]KIAxRE motif. The Proton acceptor role is filled by Asp-125. Thr-158 is modified (phosphothreonine). At Tyr-160 the chain carries Phosphotyrosine. Disordered stretches follow at residues 362–427 (VIKA…PHAG), 448–513 (SSNL…NKRK), and 551–586 (RESK…GKNL). A compositionally biased stretch (basic and acidic residues) spans 368 to 386 (GKGDVPDQKKPEYEGDHRQ). Polar residues predominate over residues 387–397 (QGTADDTQPSS). Positions 448 to 457 (SSNLSHPNSR) are enriched in low complexity. 2 stretches are compositionally biased toward polar residues: residues 468–491 (SSQT…QVQT) and 499–509 (RTGQNDQISSG). Residues 570–585 (NQEKQEGGDGDCEGKN) show a composition bias toward basic and acidic residues.

It belongs to the protein kinase superfamily. CMGC Ser/Thr protein kinase family. CDC2/CDKX subfamily.

It localises to the cytoplasm. It catalyses the reaction L-seryl-[protein] + ATP = O-phospho-L-seryl-[protein] + ADP + H(+). The catalysed reaction is L-threonyl-[protein] + ATP = O-phospho-L-threonyl-[protein] + ADP + H(+). The protein is Cyclin-dependent kinase-like 3 of Mus musculus (Mouse).